Consider the following 200-residue polypeptide: Small ribosomal subunit protein uS4 (200 aa).

An S4 RNA-binding domain is found at 92-155; that stretch reads SRLDAVVYQL…QKLNIIAESV (64 aa).

This sequence belongs to the universal ribosomal protein uS4 family. Part of the 30S ribosomal subunit. Contacts protein S5. The interaction surface between S4 and S5 is involved in control of translational fidelity.

Its function is as follows. One of the primary rRNA binding proteins, it binds directly to 16S rRNA where it nucleates assembly of the body of the 30S subunit. With S5 and S12 plays an important role in translational accuracy. The chain is Small ribosomal subunit protein uS4 from Macrococcus caseolyticus (strain JCSC5402) (Macrococcoides caseolyticum).